We begin with the raw amino-acid sequence, 367 residues long: NADH-quinone oxidoreductase subunit D (367 aa).

Belongs to the complex I 49 kDa subunit family. As to quaternary structure, NDH-1 is composed of 14 different subunits. Subunits NuoB, C, D, E, F, and G constitute the peripheral sector of the complex.

It localises to the cell membrane. It carries out the reaction a quinone + NADH + 5 H(+)(in) = a quinol + NAD(+) + 4 H(+)(out). In terms of biological role, NDH-1 shuttles electrons from NADH, via FMN and iron-sulfur (Fe-S) centers, to quinones in the respiratory chain. The immediate electron acceptor for the enzyme in this species is believed to be a menaquinone. Couples the redox reaction to proton translocation (for every two electrons transferred, four hydrogen ions are translocated across the cytoplasmic membrane), and thus conserves the redox energy in a proton gradient. The protein is NADH-quinone oxidoreductase subunit D of Geobacillus kaustophilus (strain HTA426).